Consider the following 966-residue polypeptide: Isoleucine--tRNA ligase (966 aa).

Residues 1–16 (MSDDKRAKSDKNEKNK) are compositionally biased toward basic and acidic residues. The disordered stretch occupies residues 1 to 24 (MSDDKRAKSDKNEKNKYPVNLLDT). A 'HIGH' region motif is present at residues 69-79 (PYANGDIHIGH). Glu599 is a binding site for L-isoleucyl-5'-AMP. Positions 640–644 (KMSKS) match the 'KMSKS' region motif. Lys643 is a binding site for ATP. Positions 929, 932, 949, and 952 each coordinate Zn(2+).

Belongs to the class-I aminoacyl-tRNA synthetase family. IleS type 1 subfamily. In terms of assembly, monomer. Zn(2+) is required as a cofactor.

The protein resides in the cytoplasm. The catalysed reaction is tRNA(Ile) + L-isoleucine + ATP = L-isoleucyl-tRNA(Ile) + AMP + diphosphate. Catalyzes the attachment of isoleucine to tRNA(Ile). As IleRS can inadvertently accommodate and process structurally similar amino acids such as valine, to avoid such errors it has two additional distinct tRNA(Ile)-dependent editing activities. One activity is designated as 'pretransfer' editing and involves the hydrolysis of activated Val-AMP. The other activity is designated 'posttransfer' editing and involves deacylation of mischarged Val-tRNA(Ile). The protein is Isoleucine--tRNA ligase of Cupriavidus taiwanensis (strain DSM 17343 / BCRC 17206 / CCUG 44338 / CIP 107171 / LMG 19424 / R1) (Ralstonia taiwanensis (strain LMG 19424)).